The chain runs to 305 residues: NDP-polyphosphate phosphotransferase 1 (305 aa).

This sequence belongs to the polyphosphate kinase 2 (PPK2) family. Class I subfamily.

It catalyses the reaction [phosphate](n) + ATP = [phosphate](n+1) + ADP. The catalysed reaction is [phosphate](n) + CTP = [phosphate](n+1) + CDP. It carries out the reaction [phosphate](n) + GTP = [phosphate](n+1) + GDP. The enzyme catalyses [phosphate](n) + UTP = [phosphate](n+1) + UDP. Its activity is regulated as follows. Shows little dependence on metals. In terms of biological role, uses inorganic polyphosphate (polyP) as a donor to convert NDP to NTP. PolyP hydrolysis is slightly faster with GDP, but it can also use ADP, CDP and UDP. The chain is NDP-polyphosphate phosphotransferase 1 from Ruegeria pomeroyi (strain ATCC 700808 / DSM 15171 / DSS-3) (Silicibacter pomeroyi).